The primary structure comprises 345 residues: MPSQSLTIRLPKFEETFSVFPDNGLNPHYANSRAESRAWINQYHHAVCGPNMRTFMDKCNFELAGALFYPYANEAGLRATMDLVNLLWLYDELTDTKTETEAVNAAHIVACALREPDFDDGTWICSMIKDFNQRHISKAGPNTAYRFIYNFCNYVEAVGTEAGLRAKNEILDITTYISFRRETSALRLTFDLVQYCLGIDLPQYVHDDPVFASGYNAAMDLVCWTNDLFSYNREQAKGHAGANVVTVIMKSKGVDIQSAVDFVGGYCEALTSQLVEARRILLSRSHRVYSKDAVRILEAFGDFVRGNDQWSFASERYFGQKNKVVKESRIVEIITPFSDLIAINE.

Mg(2+) contacts are provided by Asp-91, Asn-226, Ser-230, and Glu-234. Residues 91 to 95 (DELTD) carry the DDXXD motif motif. Positions 316 and 317 each coordinate (2E,6E)-farnesyl diphosphate.

This sequence belongs to the terpene synthase family. Requires Mg(2+) as cofactor.

It carries out the reaction (2E,6E)-farnesyl diphosphate = viridiflorene + diphosphate. Functionally, terpene cyclase that catalyzes the cyclization of farnesyl diphosphate (FPP) to various sesquiterpenes, including beta-elemene, viridiflorene and gamma-cadinene. Gamma-cadinene is the major product of PILCRDRAFT_825684. This chain is Sesquiterpene synthase PILCRDRAFT_825684, found in Piloderma croceum (strain F 1598).